Here is a 321-residue protein sequence, read N- to C-terminus: Genome polyprotein (321 aa).

Residues 1 to 52 (RNLGKVIDTLTCGFADLMGYIPLVGAPLGGAARALAHGVRVLEDGVNYATGN) are Cytoplasmic-facing. The segment at 6 to 57 (VIDTLTCGFADLMGYIPLVGAPLGGAARALAHGVRVLEDGVNYATGNLPGCS) is interaction with APOA2. The tract at residues 48–51 (YATG) is important for lipid droplets localization. A helical membrane pass occupies residues 53–73 (LPGCSFSLFLLALLSCLTVPA). A propeptide spans 62 to 75 (LLALLSCLTVPASA) (ER anchor for the core protein, removed in mature form by host signal peptidase). The Lumenal portion of the chain corresponds to 74 to 242 (SAYQVRNSTG…AGAHWGVLAG (169 aa)). Residues asparagine 80, asparagine 93, and asparagine 118 are each glycosylated (N-linked (GlcNAc...) asparagine; by host). Residues 149-180 (LVGSATLCSALYVGDLCGSIFLVGQLFTFSPR) form an important for fusion region. Asparagine 189 carries an N-linked (GlcNAc...) asparagine; by host glycan. The chain crosses the membrane as a helical span at residues 243 to 263 (IAYFSMVGNWAKVLVVLLLFA). Residues 264–321 (GVDAETTVTGGSAAHGALGIASLFNQGARQNIQLINTNGSWHINSTALNCNDSLNTGW) lie on the Lumenal side of the membrane. An HVR1 region spans residues 268–294 (ETTVTGGSAAHGALGIASLFNQGARQN). Asparagine 301, asparagine 307, and asparagine 314 each carry an N-linked (GlcNAc...) (high mannose) asparagine; by host glycan.

The protein belongs to the hepacivirus polyprotein family. As to quaternary structure, homooligomer. Interacts with E1 (via C-terminus). Interacts with the non-structural protein 5A. Interacts (via N-terminus) with host STAT1 (via SH2 domain); this interaction results in decreased STAT1 phosphorylation and ubiquitin-mediated proteasome-dependent STAT1 degradation, leading to decreased IFN-stimulated gene transcription. Interacts with host STAT3; this interaction constitutively activates STAT3. Interacts with host LTBR receptor. Interacts with host TNFRSF1A receptor and possibly induces apoptosis. Interacts with host HNRPK. Interacts with host YWHAE. Interacts with host UBE3A/E6AP. Interacts with host DDX3X. Interacts with host APOA2. Interacts with host RXRA protein. Interacts with host SP110 isoform 3/Sp110b; this interaction sequesters the transcriptional corepressor SP110 away from the nucleus. Interacts with host CREB3 nuclear transcription protein; this interaction triggers cell transformation. Interacts with host ACY3. Interacts with host C1QR1. Interacts with host RBM24; this interaction, which enhances the interaction of the mature core protein with 5'-UTR, may inhibit viral translation and favor replication. Interacts with host EIF2AK2/PKR; this interaction induces the autophosphorylation of EIF2AK2. Part of the viral assembly initiation complex composed of NS2, E1, E2, NS3, NS4A, NS5A and the mature core protein. In terms of assembly, forms a heterodimer with envelope glycoprotein E2. Interacts with mature core protein. Interacts with protease NS2. The heterodimer E1/E2 interacts with host CLDN1; this interaction plays a role in viral entry into host cell. Interacts with host SPSB2 (via C-terminus). Part of the viral assembly initiation complex composed of NS2, E1, E2, NS3, NS4A, NS5A and the mature core protein. Forms a heterodimer with envelope glycoprotein E1. Interacts with host CD81 and SCARB1 receptors; these interactions play a role in viral entry into host cell. Interacts with host EIF2AK2/PKR; this interaction inhibits EIF2AK2 and probably allows the virus to evade the innate immune response. Interacts with host CD209/DC-SIGN and CLEC4M/DC-SIGNR. Interact with host SPCS1; this interaction is essential for viral particle assembly. Interacts with protease NS2. The heterodimer E1/E2 interacts with host CLDN1; this interaction plays a role in viral entry into host cell. Part of the viral assembly initiation complex composed of NS2, E1, E2, NS3, NS4A, NS5A and the mature core protein. In terms of processing, specific enzymatic cleavages in vivo yield mature proteins. The structural proteins, core, E1, E2 and p7 are produced by proteolytic processing by host signal peptidases. The core protein precursor is synthesized as a 23 kDa, which is retained in the ER membrane through the hydrophobic signal peptide. Cleavage by the signal peptidase releases the 21 kDa mature core protein. The cleavage of the core protein precursor occurs between aminoacids 176 and 188 but the exact cleavage site is not known. Some degraded forms of the core protein appear as well during the course of infection. The other proteins (p7, NS2, NS3, NS4A, NS4B, NS5A and NS5B) are cleaved by the viral proteases. Autoprocessing between NS2 and NS3 is mediated by the NS2 cysteine protease catalytic domain and regulated by the NS3 N-terminal domain. Post-translationally, phosphorylated by host PKC and PKA. Ubiquitinated; mediated by UBE3A and leading to core protein subsequent proteasomal degradation. In terms of processing, highly N-glycosylated.

It localises to the host endoplasmic reticulum membrane. Its subcellular location is the host mitochondrion membrane. The protein resides in the virion. The protein localises to the host cytoplasm. It is found in the host nucleus. It localises to the host lipid droplet. Its subcellular location is the virion membrane. Packages viral RNA to form a viral nucleocapsid, and promotes virion budding. Participates in the viral particle production as a result of its interaction with the non-structural protein 5A. Binds RNA and may function as a RNA chaperone to induce the RNA structural rearrangements taking place during virus replication. Modulates viral translation initiation by interacting with viral IRES and 40S ribosomal subunit. Affects various cell signaling pathways, host immunity and lipid metabolism. Prevents the establishment of cellular antiviral state by blocking the interferon-alpha/beta (IFN-alpha/beta) and IFN-gamma signaling pathways and by blocking the formation of phosphorylated STAT1 and promoting ubiquitin-mediated proteasome-dependent degradation of STAT1. Activates STAT3 leading to cellular transformation. Regulates the activity of cellular genes, including c-myc and c-fos. May repress the promoter of p53, and sequester CREB3 and SP110 isoform 3/Sp110b in the cytoplasm. Represses cell cycle negative regulating factor CDKN1A, thereby interrupting an important check point of normal cell cycle regulation. Targets transcription factors involved in the regulation of inflammatory responses and in the immune response: suppresses TNF-induced NF-kappa-B activation, and activates AP-1. Binds to dendritic cells (DCs) via C1QR1, resulting in down-regulation of T-lymphocytes proliferation. Alters lipid metabolism by interacting with hepatocellular proteins involved in lipid accumulation and storage. Induces up-regulation of FAS promoter activity, and thereby contributes to the increased triglyceride accumulation in hepatocytes (steatosis). Functionally, forms a heterodimer with envelope glycoprotein E2, which mediates virus attachment to the host cell, virion internalization through clathrin-dependent endocytosis and fusion with host membrane. Fusion with the host cell is most likely mediated by both E1 and E2, through conformational rearrangements of the heterodimer required for fusion rather than a classical class II fusion mechanism. E1/E2 heterodimer binds host apolipoproteins such as APOB and ApoE thereby forming a lipo-viro-particle (LVP). APOE associated to the LVP allows the initial virus attachment to cell surface receptors such as the heparan sulfate proteoglycans (HSPGs), syndecan-1 (SDC1), syndecan-1 (SDC2), the low-density lipoprotein receptor (LDLR) and scavenger receptor class B type I (SCARB1). The cholesterol transfer activity of SCARB1 allows E2 exposure and binding of E2 to SCARB1 and the tetraspanin CD81. E1/E2 heterodimer binding on CD81 activates the epithelial growth factor receptor (EGFR) signaling pathway. Diffusion of the complex E1-E2-EGFR-SCARB1-CD81 to the cell lateral membrane allows further interaction with Claudin 1 (CLDN1) and occludin (OCLN) to finally trigger HCV entry. In terms of biological role, forms a heterodimer with envelope glycoprotein E1, which mediates virus attachment to the host cell, virion internalization through clathrin-dependent endocytosis and fusion with host membrane. Fusion with the host cell is most likely mediated by both E1 and E2, through conformational rearrangements of the heterodimer required for fusion rather than a classical class II fusion mechanism. The interaction between envelope glycoprotein E2 and host apolipoprotein E/APOE allows the proper assembly, maturation and infectivity of the viral particles. This interaction is probably promoted via the up-regulation of cellular autophagy by the virus. E1/E2 heterodimer binds host apolipoproteins such as APOB and APOE thereby forming a lipo-viro-particle (LVP). APOE associated to the LVP allows the initial virus attachment to cell surface receptors such as the heparan sulfate proteoglycans (HSPGs), syndecan-1 (SDC1), syndecan-1 (SDC2), the low-density lipoprotein receptor (LDLR) and scavenger receptor class B type I (SCARB1). The cholesterol transfer activity of SCARB1 allows E2 exposure and binding of E2 to SCARB1 and the tetraspanin CD81. E1/E2 heterodimer binding on CD81 activates the epithelial growth factor receptor (EGFR) signaling pathway. Diffusion of the complex E1-E2-EGFR-SCARB1-CD81 to the cell lateral membrane allows further interaction with Claudin 1 (CLDN1) and occludin (OCLN) to finally trigger HCV entry. Inhibits host EIF2AK2/PKR activation, preventing the establishment of an antiviral state. Viral ligand for CD209/DC-SIGN and CLEC4M/DC-SIGNR, which are respectively found on dendritic cells (DCs), and on liver sinusoidal endothelial cells and macrophage-like cells of lymph node sinuses. These interactions allow the capture of circulating HCV particles by these cells and subsequent facilitated transmission to permissive cells such as hepatocytes and lymphocyte subpopulations. The chain is Genome polyprotein from Homo sapiens (Human).